The following is a 306-amino-acid chain: UDP-3-O-acyl-N-acetylglucosamine deacetylase (306 aa).

Histidine 79, histidine 238, and aspartate 242 together coordinate Zn(2+). Histidine 265 serves as the catalytic Proton donor.

It belongs to the LpxC family. Zn(2+) serves as cofactor.

The enzyme catalyses a UDP-3-O-[(3R)-3-hydroxyacyl]-N-acetyl-alpha-D-glucosamine + H2O = a UDP-3-O-[(3R)-3-hydroxyacyl]-alpha-D-glucosamine + acetate. Its pathway is glycolipid biosynthesis; lipid IV(A) biosynthesis; lipid IV(A) from (3R)-3-hydroxytetradecanoyl-[acyl-carrier-protein] and UDP-N-acetyl-alpha-D-glucosamine: step 2/6. Functionally, catalyzes the hydrolysis of UDP-3-O-myristoyl-N-acetylglucosamine to form UDP-3-O-myristoylglucosamine and acetate, the committed step in lipid A biosynthesis. This chain is UDP-3-O-acyl-N-acetylglucosamine deacetylase, found in Shewanella sp. (strain W3-18-1).